Consider the following 466-residue polypeptide: Dynein axonemal assembly factor 11 (466 aa).

LRR repeat units follow at residues 22 to 43 (SLEELSLHQQEIERLEHIDKWC), 45 to 66 (DLKILYLQNNLIGKIENVSKLK), 67 to 88 (KLEYLNLALNNIEKIENLEGCE), and 89 to 110 (ELAKLDLTVNFIGELSSIKNLQ). Positions 123-161 (NPCASFDHYREFVVATLPQLKWLDGKEIEPSERIKALQD) constitute an LRRCT domain. The stretch at 178-204 (LKRAKLKEEAQRKHQEEDKNEDKRSNA) forms a coiled coil. The span at 185–202 (EEAQRKHQEEDKNEDKRS) shows a compositional bias: basic and acidic residues. Disordered regions lie at residues 185-206 (EEAQRKHQEEDKNEDKRSNAGF), 268-288 (MEKQRKKQEKLSEKKKKVKPP), and 391-466 (AFKS…PPLI). Basic residues predominate over residues 269–287 (EKQRKKQEKLSEKKKKVKP). A CS domain is found at 301–396 (VNEPKIDFSL…GGQRAFKSMK (96 aa)). Basic and acidic residues-rich tracts occupy residues 398–425 (TSDRSREQTNTRSKHMEKLEVDPSKHSF) and 433–445 (QEKKHTPRRRPEP). The span at 450 to 460 (SEEDPTFEDNP) shows a compositional bias: acidic residues.

It belongs to the tilB family. Interacts (via CS domain) with ZMYND10 (via C-terminus). In terms of tissue distribution, expressed predominantly in testis and in nasal epithelial cells.

Its subcellular location is the cytoplasm. The protein localises to the cell projection. The protein resides in the cilium. It localises to the dynein axonemal particle. It is found in the flagellum. Involved in dynein arm assembly, is important for expression and transporting outer dynein arm (ODA) proteins from the cytoplasm to the cilia. Acts as a crucial component in the formation and motility of spermatozoal flagella. The sequence is that of Dynein axonemal assembly factor 11 from Homo sapiens (Human).